We begin with the raw amino-acid sequence, 947 residues long: MPSVSRAVCVQRASGNNGRRCRDGAAAAGRRSVVAQRARHGKPEVAIRSGSGGSARGGHCSPLRAVAAPIPTTKKRVFHFGKGKSEGNKAMKDLLGGKGANLAEMASIGLSVPPGFTVSTEACQQYQAAGKTLPAGLWEEIVEGLQWVEEYMAARLGDPARPLLLSVRSGAAVSMPGMMDTVLNLGLNDEVAAGLAAKSGDRFAYDSYRRFLDMFGNVVMDIPHALFEEKLEAMKAVKGLHNDTDLTATDLKELVAQYKDVYVEAKGEPFPSDPKKQLQLAVLAVFNSWDSPRAIKYRSINKITGLKGTAVNVQTMVFGNMGNTSGTGVLFTRNPSTGEKKLYGEFLVNAQGEDVVAGIRTPEDLDAMRDHMPEPYEELVENCKILESHYKEMMDIEFTVQENRLWMLQCRTGKRTGKGAVKIAVDMVNEGLVERRTALKMVEPGHLDQLLHPQFENPSGYKDKVIATGLPASPGAAVGQIVFTAEDAEAWHAQGKDVILVRTETSPEDVGGMHAAVGILTARGGMTSHAAVVARGWGKCCVSGCSSVRVNDASKIVVIEDKALHEGEWLSLNGSTGEVIIGKQPLCPPALSGDLETFMSWVDEVRKLKVMANADTPEDATTARQNGAEGIGLCRTEHMFFASDERIKAVRQMIMASSLELRQKALDRLLPYQRSDFEGIFRAMDGLPVTIRLLDPPLHEFLPEGHVEDMVRELCSETGAAQDDVLARVEKLSEVNPMLGFRGCRLGISYPELTEMQARAIFEAAITMTNQGIQVFPEIMVPLVGTPQELGHQVDVIRQIANKVFTDMGKTIGYKVGTMIEIPRAALVADEIAEQAEFFSFGTNDLTQMTFGYSRDDVGKFLPIYLSQGILQHDPFEVLDQRGVGELVKLATERGRKARPNLKVGICGEHGGEPLSVAFFAKAGLDYVSCSPFRVPIARLAAAQVLL.

The N-terminal 71 residues, 1 to 71, are a transit peptide targeting the chloroplast; that stretch reads MPSVSRAVCV…PLRAVAAPIP (71 aa). The segment at 39–60 is disordered; that stretch reads RHGKPEVAIRSGSGGSARGGHC. Thr527 bears the Phosphothreonine; by PDRP1 mark. Residue His529 is the Tele-phosphohistidine intermediate of the active site. 7 residues coordinate substrate: Arg635, Arg692, Glu821, Gly842, Thr843, Asn844, and Asp845. Glu821 lines the Mg(2+) pocket. Asp845 is a Mg(2+) binding site. Cys907 serves as the catalytic Proton donor.

Belongs to the PEP-utilizing enzyme family. In terms of assembly, homotetramer. Mg(2+) is required as a cofactor. Phosphorylation of Thr-527 in the dark inactivates the enzyme. Dephosphorylation upon light stimulation reactivates the enzyme. Phosphorylation increases during the first 20 days post-pollination and then remains constant through the 40-day mature seed stage. Reactivation by dephosphorylation during germination is negligible. In terms of tissue distribution, isoform 1 is only expressed in green leaves. Isoform 2 is found in roots, stems, rachis branches, leaf sheaths, green leaves and spikelets. The non-phosphorylated PPDK in mature seeds is endosperm-localized.

It localises to the plastid. It is found in the chloroplast. Its subcellular location is the cytoplasm. It carries out the reaction pyruvate + phosphate + ATP = phosphoenolpyruvate + AMP + diphosphate + H(+). Activated by light-induced dephosphorylation. Inhibited by dark-induced phosphorylation. Both reactions are catalyzed by PDRP1. Its function is as follows. Formation of phosphoenolpyruvate. The cytoplasmic isoform supports the biosynthetic processes in the nascent endosperm and provides an efficient mechanism for glycolytic ATP synthesis in oxygen depleted tissues. May be involved in regulating the flux of carbon into starch and fatty acids of seeds and in the remobilization of nitrogen reserves in senescing leaves. The chain is Pyruvate, phosphate dikinase 1, chloroplastic (PPDK1) from Oryza sativa subsp. japonica (Rice).